The following is a 135-amino-acid chain: Putative nickel-responsive regulator (135 aa).

Ni(2+) contacts are provided by histidine 79, histidine 90, histidine 92, and cysteine 98.

This sequence belongs to the transcriptional regulatory CopG/NikR family. It depends on Ni(2+) as a cofactor.

Transcriptional regulator. In Dictyoglomus thermophilum (strain ATCC 35947 / DSM 3960 / H-6-12), this protein is Putative nickel-responsive regulator.